We begin with the raw amino-acid sequence, 331 residues long: uncharacterized protein (331 aa).

Belongs to the ornithine cyclodeaminase/mu-crystallin family.

This is an uncharacterized protein from Sinorhizobium fredii (strain NBRC 101917 / NGR234).